A 155-amino-acid chain; its full sequence is MSRRGTAEKKTAKSDPIYRNRLVNMLVNRILKHGKKSLAYQIIYRAVKKIQQKTETNPLSVLRQAIRGVTPDIAVKARRVGGSTHQVPIEIGSTQGKALAIRWLLGASRKRPGRNMAFKLSSELVDAAKGSGDAIRKKEETHKMAEANRAFAHFR.

The protein belongs to the universal ribosomal protein uS7 family. In terms of assembly, part of the 30S ribosomal subunit.

It localises to the plastid. The protein resides in the chloroplast. One of the primary rRNA binding proteins, it binds directly to 16S rRNA where it nucleates assembly of the head domain of the 30S subunit. This Spathiphyllum wallisii (Peace lily) protein is Small ribosomal subunit protein uS7c (rps7).